An 831-amino-acid chain; its full sequence is Periplasmic nitrate reductase (831 aa).

Positions 1–29 (MKFTRREFMKAQAAASAAAVAGIALPATA) form a signal peptide, tat-type signal. The 4Fe-4S Mo/W bis-MGD-type domain occupies 41–97 (IKWEKAPCRFCGTGCSVLVGTQHGRVVATQGDPESPVNKGLNCVKGYFLSKIMYGKD). The [4Fe-4S] cluster site is built by cysteine 48, cysteine 51, cysteine 55, and cysteine 83. Mo-bis(molybdopterin guanine dinucleotide) contacts are provided by residues lysine 85, glutamine 152, asparagine 177, cysteine 181, 214–221 (WGSNMAEM), 245–249 (STYTH), 264–266 (QSD), methionine 374, glutamine 378, asparagine 484, 510–511 (SD), lysine 533, aspartate 560, and 720–729 (TGRVLEHWHS). Residue tryptophan 796 participates in substrate binding. Mo-bis(molybdopterin guanine dinucleotide) contacts are provided by asparagine 804 and lysine 821.

This sequence belongs to the prokaryotic molybdopterin-containing oxidoreductase family. NasA/NapA/NarB subfamily. As to quaternary structure, component of the periplasmic nitrate reductase NapAB complex composed of NapA and NapB. Requires [4Fe-4S] cluster as cofactor. Mo-bis(molybdopterin guanine dinucleotide) serves as cofactor. In terms of processing, predicted to be exported by the Tat system. The position of the signal peptide cleavage has not been experimentally proven.

The protein localises to the periplasm. The catalysed reaction is 2 Fe(II)-[cytochrome] + nitrate + 2 H(+) = 2 Fe(III)-[cytochrome] + nitrite + H2O. Functionally, catalytic subunit of the periplasmic nitrate reductase complex NapAB. Receives electrons from NapB and catalyzes the reduction of nitrate to nitrite. The sequence is that of Periplasmic nitrate reductase from Psychromonas ingrahamii (strain DSM 17664 / CCUG 51855 / 37).